The sequence spans 160 residues: Anaerobic nitrite reductase AHB1 (160 aa).

Residues valine 8–asparagine 157 enclose the Globin domain. A Homodimerization motif is present at residues glutamate 41–threonine 45. Heme b is bound by residues serine 51, lysine 65, histidine 69, arginine 99, serine 103, and histidine 104. Positions aspartate 111–glutamate 123 match the Homodimerization motif.

This sequence belongs to the plant globin family. In terms of assembly, homodimer. It depends on heme b as a cofactor. Expressed in roots and rosette leaves.

It localises to the cytoplasm. Its subcellular location is the nucleus. The enzyme catalyses Fe(III)-heme b-[protein] + nitric oxide + H2O = Fe(II)-heme b-[protein] + nitrite + 2 H(+). Functionally, phytoglobin that reduces nitrite to nitric oxide (NO) under anoxic conditions (e.g. during flooding or in waterlogged soil). May not function as an oxygen storage or transport protein. Has an unusually high affinity for O(2) through an hexacoordinate heme iron because of a very low dissociation constant. This chain is Anaerobic nitrite reductase AHB1, found in Arabidopsis thaliana (Mouse-ear cress).